Consider the following 666-residue polypeptide: Galactocerebrosidase (666 aa).

A signal peptide spans 1 to 22; that stretch reads MIYKLYFAIALCFSLCFDLCIA. T91 contacts substrate. N125 carries an N-linked (GlcNAc...) asparagine glycan. Positions 133 and 179 each coordinate substrate. The Proton donor/acceptor role is filled by E180. E256 (nucleophile) is an active-site residue. The cysteines at positions 269 and 376 are disulfide-linked. N361 carries N-linked (GlcNAc...) asparagine glycosylation. Residue R378 coordinates substrate. N-linked (GlcNAc...) asparagine glycans are attached at residues N385, N390, N500, and N540.

The protein belongs to the glycosyl hydrolase 59 family.

The protein resides in the lysosome. It carries out the reaction a beta-D-galactosyl-(1&lt;-&gt;1')-N-acylsphing-4-enine + H2O = an N-acylsphing-4-enine + D-galactose. The enzyme catalyses beta-D-galactosyl-(1&lt;-&gt;1)-sphing-4-enine + H2O = sphing-4-enine + D-galactose. The catalysed reaction is a D-galactosylceramide + H2O = an N-acyl-sphingoid base + D-galactose. Hydrolyzes the galactose ester bonds of glycolipids such as galactosylceramide and galactosylsphingosine. The protein is Galactocerebrosidase of Salmo salar (Atlantic salmon).